Here is a 188-residue protein sequence, read N- to C-terminus: Elongation factor P (188 aa).

Belongs to the elongation factor P family.

It is found in the cytoplasm. Its pathway is protein biosynthesis; polypeptide chain elongation. Involved in peptide bond synthesis. Stimulates efficient translation and peptide-bond synthesis on native or reconstituted 70S ribosomes in vitro. Probably functions indirectly by altering the affinity of the ribosome for aminoacyl-tRNA, thus increasing their reactivity as acceptors for peptidyl transferase. The sequence is that of Elongation factor P from Nitrobacter winogradskyi (strain ATCC 25391 / DSM 10237 / CIP 104748 / NCIMB 11846 / Nb-255).